The chain runs to 468 residues: BTB/POZ domain-containing protein 17 (468 aa).

Residues 1 to 16 (MRRFCVVPLLLVLVEA) form the signal peptide. One can recognise a BTB domain in the interval 51 to 120 (TDTILRIRTA…FYCGEISVNL (70 aa)). The BACK domain maps to 159–259 (VVSWYHYALR…ISPSQLFQIQ (101 aa)).

Its subcellular location is the secreted. The sequence is that of BTB/POZ domain-containing protein 17 (btbd17) from Xenopus tropicalis (Western clawed frog).